The sequence spans 244 residues: Small ribosomal subunit protein eS4 (244 aa).

A compositionally biased stretch (basic residues) spans 1–14 (MANKGPRKHLKRLP). Positions 1–36 (MANKGPRKHLKRLPAPKNWQISRKTNKYTTRPSAGP) are disordered. Residues 19–32 (WQISRKTNKYTTRP) are compositionally biased toward polar residues. Residues 43-106 (LPLLLVLRDL…NESFLVVLDE (64 aa)) form the S4 RNA-binding domain.

This sequence belongs to the eukaryotic ribosomal protein eS4 family.

The sequence is that of Small ribosomal subunit protein eS4 from Methanococcus aeolicus (strain ATCC BAA-1280 / DSM 17508 / OCM 812 / Nankai-3).